A 190-amino-acid polypeptide reads, in one-letter code: Holliday junction branch migration complex subunit RuvA (190 aa).

The interval 1-64 (MIGSLTGIIE…DNLTQLYGFL (64 aa)) is domain I. The domain II stretch occupies residues 65–142 (DKQEQDYMRM…KMPIEETLII (78 aa)). K143 is a region of interest (flexible linker). Positions 143–190 (KEDDSLAALISLGYDKLKAFNAIQEIKSDFPNANIQEIIRKALQKLSQ) are domain III.

It belongs to the RuvA family. In terms of assembly, homotetramer. Forms an RuvA(8)-RuvB(12)-Holliday junction (HJ) complex. HJ DNA is sandwiched between 2 RuvA tetramers; dsDNA enters through RuvA and exits via RuvB. An RuvB hexamer assembles on each DNA strand where it exits the tetramer. Each RuvB hexamer is contacted by two RuvA subunits (via domain III) on 2 adjacent RuvB subunits; this complex drives branch migration. In the full resolvosome a probable DNA-RuvA(4)-RuvB(12)-RuvC(2) complex forms which resolves the HJ.

The protein localises to the cytoplasm. The RuvA-RuvB-RuvC complex processes Holliday junction (HJ) DNA during genetic recombination and DNA repair, while the RuvA-RuvB complex plays an important role in the rescue of blocked DNA replication forks via replication fork reversal (RFR). RuvA specifically binds to HJ cruciform DNA, conferring on it an open structure. The RuvB hexamer acts as an ATP-dependent pump, pulling dsDNA into and through the RuvAB complex. HJ branch migration allows RuvC to scan DNA until it finds its consensus sequence, where it cleaves and resolves the cruciform DNA. This is Holliday junction branch migration complex subunit RuvA from Ehrlichia canis (strain Jake).